A 276-amino-acid chain; its full sequence is Putative ankyrin repeat protein R838 (276 aa).

4 ANK repeats span residues 134–163, 164–193, 195–223, and 225–253; these read DGDNALLMAAENGYYEVVTYLINKGCDPRS, DYDYALRSAAEKGHIDVVKLLLEKGADISS, NHWPLSYAALEGKFEMVKFLISRGADVRA, and NYNPIKYALDGGHREIADYMLDLCPEIGS. The interval 254 to 276 is disordered; the sequence is VSDDDTYDSDSSDYSEDDSESIN. The span at 255-276 shows a compositional bias: acidic residues; that stretch reads SDDDTYDSDSSDYSEDDSESIN.

This chain is Putative ankyrin repeat protein R838, found in Acanthamoeba polyphaga (Amoeba).